We begin with the raw amino-acid sequence, 327 residues long: Zinc transport protein ZntB (327 aa).

The Cytoplasmic portion of the chain corresponds to 1-273; the sequence is MEAIKGSDVN…ARRTYTMSLM (273 aa). Residues 274–294 form a helical membrane-spanning segment; it reads AMVFLPSTFLTGLFGVNLGGI. Over 295 to 300 the chain is Periplasmic; sequence PGGGWQ. A helical membrane pass occupies residues 301-321; sequence FGFSIFCILLVVLIGGVALWL. Topologically, residues 322 to 327 are cytoplasmic; it reads HRSKWL.

It belongs to the CorA metal ion transporter (MIT) (TC 1.A.35) family.

It is found in the cell inner membrane. The enzyme catalyses Zn(2+)(out) + H(+)(out) = Zn(2+)(in) + H(+)(in). Zinc transporter. Acts as a Zn(2+):proton symporter, which likely mediates zinc ion uptake. The protein is Zinc transport protein ZntB of Escherichia coli O139:H28 (strain E24377A / ETEC).